The chain runs to 673 residues: MTDRFQLVSPYSPAGDQPAAIDKLVANFEAGLAKQTLLGVTGSGKTYTIANVVQQVQKPTLVMAPNKTLAAQLYGEFKSFFPHNAVEYFVSYYDYYQPEAYVPSSDTFIEKDSSINEHIEQMRLSATKTLLSRRDSLVVATVSAIYGLGAPEDYLSLRLILSIGEHIDQRQLIRHLTDLQYTRNEFELTRGAFRVRGEVLDVFPAESDTEALRIELFDGDIEQLTLFDPLTGETLRKLQRYTVYPKTHYATTRERTLSAVDTIKEELKERLEQLYSQSKLVEAQRLAQRTQFDLEMMAEVGFCNGIENYSRHLTGKAPGEPPPTLFDYLPPDALLVIDESHVTIPQIGAMYKGDRSRKETLVEFGFRLPSALDNRPLRFEEWEARSPRSIYVSATPGPYELRESAGEVTELVVRPTGLIDPVVEIRPVGMQVDDLMSEIHERIKLGDRVLVTTLTKRMAENLTEYLGEHGIRVRYLHSDIDTVERVEIIRDLRLGKFDVLVGINLLREGLDMPEVSLVAILDADKEGFLRSTGSLIQTIGRAARNLRGKAILYADKMTRSMQAAIDESDRRREKQVEYNLEHGITPESVERPISDIMEGAREDAAEKKSGKGRSKSRQVAEETPDYRAMKPAEIAGKLKSLEQKMYQHAKDLEFEAAAQIRDQIQKLKTASLA.

A Helicase ATP-binding domain is found at 26–183 (ANFEAGLAKQ…RHLTDLQYTR (158 aa)). 39–46 (GVTGSGKT) provides a ligand contact to ATP. Positions 92-115 (YYDYYQPEAYVPSSDTFIEKDSSI) match the Beta-hairpin motif. A Helicase C-terminal domain is found at 431–597 (QVDDLMSEIH…SVERPISDIM (167 aa)). Residues 601–631 (REDAAEKKSGKGRSKSRQVAEETPDYRAMKP) are disordered. Residues 618-630 (QVAEETPDYRAMK) show a composition bias toward basic and acidic residues. One can recognise a UVR domain in the interval 635 to 670 (AGKLKSLEQKMYQHAKDLEFEAAAQIRDQIQKLKTA).

The protein belongs to the UvrB family. Forms a heterotetramer with UvrA during the search for lesions. Interacts with UvrC in an incision complex.

Its subcellular location is the cytoplasm. Functionally, the UvrABC repair system catalyzes the recognition and processing of DNA lesions. A damage recognition complex composed of 2 UvrA and 2 UvrB subunits scans DNA for abnormalities. Upon binding of the UvrA(2)B(2) complex to a putative damaged site, the DNA wraps around one UvrB monomer. DNA wrap is dependent on ATP binding by UvrB and probably causes local melting of the DNA helix, facilitating insertion of UvrB beta-hairpin between the DNA strands. Then UvrB probes one DNA strand for the presence of a lesion. If a lesion is found the UvrA subunits dissociate and the UvrB-DNA preincision complex is formed. This complex is subsequently bound by UvrC and the second UvrB is released. If no lesion is found, the DNA wraps around the other UvrB subunit that will check the other stand for damage. The sequence is that of UvrABC system protein B from Xanthomonas oryzae pv. oryzae (strain MAFF 311018).